The primary structure comprises 200 residues: NADH-quinone oxidoreductase subunit B (200 aa).

Positions 78, 79, 144, and 174 each coordinate [4Fe-4S] cluster.

It belongs to the complex I 20 kDa subunit family. NDH-1 is composed of 14 different subunits. Subunits NuoB, C, D, E, F, and G constitute the peripheral sector of the complex. [4Fe-4S] cluster serves as cofactor.

The protein localises to the cell membrane. It catalyses the reaction a quinone + NADH + 5 H(+)(in) = a quinol + NAD(+) + 4 H(+)(out). In terms of biological role, NDH-1 shuttles electrons from NADH, via FMN and iron-sulfur (Fe-S) centers, to quinones in the respiratory chain. The immediate electron acceptor for the enzyme in this species is believed to be ubiquinone. Couples the redox reaction to proton translocation (for every two electrons transferred, four hydrogen ions are translocated across the cytoplasmic membrane), and thus conserves the redox energy in a proton gradient. This Dehalococcoides mccartyi (strain ATCC BAA-2266 / KCTC 15142 / 195) (Dehalococcoides ethenogenes (strain 195)) protein is NADH-quinone oxidoreductase subunit B.